The following is a 357-amino-acid chain: Eugenol O-methyltransferase (357 aa).

S-adenosyl-L-methionine is bound by residues Gly-203, Asp-226, Asp-246, Met-247, and Lys-260. Residue His-264 is the Proton acceptor of the active site.

It belongs to the class I-like SAM-binding methyltransferase superfamily. Cation-independent O-methyltransferase family. COMT subfamily. As to expression, specifically expressed in the peltate glandular trichomes on the surface of the young basil leaves.

The enzyme catalyses (E)-isoeugenol + S-adenosyl-L-methionine = (E)-isomethyleugenol + S-adenosyl-L-homocysteine + H(+). It participates in aromatic compound metabolism; phenylpropanoid biosynthesis. Functionally, phenylpropene O-methyltransferase that catalyzes the methylation of the para-4-hydroxyl of eugenol to methyleugenol. Can also convert chavicol to methylchavicol but with less affinity. The polypeptide is Eugenol O-methyltransferase (EOMT1) (Ocimum basilicum (Sweet basil)).